Consider the following 314-residue polypeptide: tRNA uridine(34) hydroxylase (314 aa).

The 95-residue stretch at 140–234 (ARDDVILIDT…YLEETPPDES (95 aa)) folds into the Rhodanese domain. The active-site Cysteine persulfide intermediate is the cysteine 194.

Belongs to the TrhO family.

The enzyme catalyses uridine(34) in tRNA + AH2 + O2 = 5-hydroxyuridine(34) in tRNA + A + H2O. Its function is as follows. Catalyzes oxygen-dependent 5-hydroxyuridine (ho5U) modification at position 34 in tRNAs. This Acinetobacter baumannii (strain AYE) protein is tRNA uridine(34) hydroxylase.